The sequence spans 527 residues: UvrABC system protein C (527 aa).

In terms of domain architecture, GIY-YIG spans 9 to 87 (KNPGCYIYKN…IKKYSPKYNI (79 aa)). Residues 191 to 226 (DSLIHELKNEMNEKSKNLQFEEALLIREEINAIERL) form the UVR domain.

The protein belongs to the UvrC family. Interacts with UvrB in an incision complex.

The protein resides in the cytoplasm. Its function is as follows. The UvrABC repair system catalyzes the recognition and processing of DNA lesions. UvrC both incises the 5' and 3' sides of the lesion. The N-terminal half is responsible for the 3' incision and the C-terminal half is responsible for the 5' incision. The sequence is that of UvrABC system protein C from Methanococcus maripaludis (strain DSM 14266 / JCM 13030 / NBRC 101832 / S2 / LL).